Reading from the N-terminus, the 292-residue chain is 33 kDa chaperonin (292 aa).

Intrachain disulfides connect cysteine 237/cysteine 239 and cysteine 270/cysteine 273.

This sequence belongs to the HSP33 family. Under oxidizing conditions two disulfide bonds are formed involving the reactive cysteines. Under reducing conditions zinc is bound to the reactive cysteines and the protein is inactive.

The protein resides in the cytoplasm. Redox regulated molecular chaperone. Protects both thermally unfolding and oxidatively damaged proteins from irreversible aggregation. Plays an important role in the bacterial defense system toward oxidative stress. In Lachnoclostridium phytofermentans (strain ATCC 700394 / DSM 18823 / ISDg) (Clostridium phytofermentans), this protein is 33 kDa chaperonin.